Here is a 198-residue protein sequence, read N- to C-terminus: dTTP/UTP pyrophosphatase (198 aa).

The active-site Proton acceptor is the aspartate 75.

The protein belongs to the Maf family. YhdE subfamily. Requires a divalent metal cation as cofactor.

It localises to the cytoplasm. It carries out the reaction dTTP + H2O = dTMP + diphosphate + H(+). The catalysed reaction is UTP + H2O = UMP + diphosphate + H(+). Nucleoside triphosphate pyrophosphatase that hydrolyzes dTTP and UTP. May have a dual role in cell division arrest and in preventing the incorporation of modified nucleotides into cellular nucleic acids. This chain is dTTP/UTP pyrophosphatase, found in Wolbachia pipientis wMel.